A 201-amino-acid polypeptide reads, in one-letter code: Adenylyl-sulfate kinase (201 aa).

Position 35-42 (35-42 (GLSGSGKS)) interacts with ATP. The active-site Phosphoserine intermediate is the Ser-109.

This sequence belongs to the APS kinase family.

The catalysed reaction is adenosine 5'-phosphosulfate + ATP = 3'-phosphoadenylyl sulfate + ADP + H(+). Its pathway is sulfur metabolism; hydrogen sulfide biosynthesis; sulfite from sulfate: step 2/3. Catalyzes the synthesis of activated sulfate. The chain is Adenylyl-sulfate kinase from Salmonella typhi.